Consider the following 456-residue polypeptide: MVKLVCAIVGVAGSAFPVDTDASQLVGDLKKAIKAENAMTFTGDAKDLQLFLAKQPVDDESGKEVVPVYRPSAEEMKEESFKWLPDEHRAALKLVEGESDDYIHALTAGEPILGSKTLTTWFYTKNNMELPSSEQIHVLVVVPDGAGGSASDTSRMDRLFDKVDKVYEHTVLSKRTRYVHSEMNSAKGNILLNDLKIRISPVDTVKFAGGVPTPAKEFKWKSDRTEEQQKEPYREYVVANIGDVLTNNKLCVVGVEKGVNILTVEVPGRDIVLAGRTDMIVLSDIAQKFPHYLPHLPGVRMLIEVKKVVTTASEFQALSELIALDIIATESVMALLTNLTNHWQFFWVSRKSDDRVIIETTTLIAPGEAFAVIRTLLDQSPSAGAEVSLPCFEKPVKRQKLSQLLPSISEASGSSGIRESIERYYDIASMLGPDLEMARAVASQVARSIPTLSYFS.

The first 17 residues, 1–17 (MVKLVCAIVGVAGSAFP), serve as a signal peptide directing secretion. An LQLFLAK domain region spans residues 18-54 (VDTDASQLVGDLKKAIKAENAMTFTGDAKDLQLFLAK). A DWL domain region spans residues 55 to 136 (QPVDDESGKE…NMELPSSEQI (82 aa)). The HVLVXXP motif motif lies at 137-143 (HVLVVVP). Asparagine 338 carries an N-linked (GlcNAc...) asparagine glycan.

It belongs to the Crinkler effector family.

It localises to the secreted. The protein localises to the host nucleus. Functionally, secreted effector that effector that induces cell death when expressed in host plants. Induces the expression of defense response genes in tomato. The protein is Crinkler effector protein 2 of Phytophthora infestans (Potato late blight agent).